The sequence spans 658 residues: Glycine--tRNA ligase beta subunit (658 aa).

Belongs to the class-II aminoacyl-tRNA synthetase family. Tetramer of two alpha and two beta subunits.

The protein localises to the cytoplasm. It carries out the reaction tRNA(Gly) + glycine + ATP = glycyl-tRNA(Gly) + AMP + diphosphate. The sequence is that of Glycine--tRNA ligase beta subunit from Rickettsia bellii (strain OSU 85-389).